Here is a 287-residue protein sequence, read N- to C-terminus: Large ribosomal subunit protein uL2 (287 aa).

The tract at residues 221–287 (RGSVMNPCDH…SKRSRGGRDS (67 aa)) is disordered. Residues 258 to 287 (KTRKRNKPSNRFVLRKRRRVSKRSRGGRDS) are compositionally biased toward basic residues.

Belongs to the universal ribosomal protein uL2 family. In terms of assembly, part of the 50S ribosomal subunit. Forms a bridge to the 30S subunit in the 70S ribosome.

One of the primary rRNA binding proteins. Required for association of the 30S and 50S subunits to form the 70S ribosome, for tRNA binding and peptide bond formation. It has been suggested to have peptidyltransferase activity; this is somewhat controversial. Makes several contacts with the 16S rRNA in the 70S ribosome. This chain is Large ribosomal subunit protein uL2, found in Prochlorococcus marinus (strain SARG / CCMP1375 / SS120).